The sequence spans 161 residues: 18.3 kDa class I heat shock protein (161 aa).

The region spanning glutamate 48–tyrosine 161 is the sHSP domain.

Belongs to the small heat shock protein (HSP20) family. As to quaternary structure, forms oligomeric structures.

The protein resides in the cytoplasm. This Oxybasis rubra (Red goosefoot) protein is 18.3 kDa class I heat shock protein (HSP18).